The following is a 137-amino-acid chain: MLQPKKTKFRKQFKGRIHGTAKGGTDLNFGSYGLKALEPERVTARQIEAARRAITREMKRQGRVWIRIFPDVPVTQKPTEVRMGSGKGSPEYWAARVHPGRVMFEIDGVAEDIAREALRLGAAKLPVRTRFIQRIAD.

It belongs to the universal ribosomal protein uL16 family. Part of the 50S ribosomal subunit.

In terms of biological role, binds 23S rRNA and is also seen to make contacts with the A and possibly P site tRNAs. This chain is Large ribosomal subunit protein uL16, found in Methylobacterium sp. (strain 4-46).